The sequence spans 444 residues: MATITVVKARQIFDSRGNPTVEVDIHTSNGIKVTAAVPSGASTGIYEALELRDGGSDYLGKGVSKAVGNVNNIIGPALIGKDPTQQTAIDNFMVHELDGTQNEWGWCKQKLGANAILAVSLAVCKAGAVVSGIPLYKHIANLAGNPKIVLPVPAFNVINGGSHAGNKLAMQEFMILPVGAASFKEAMKMGVEVYHHLKSVIKKKYGQDATNVGDEGGFAPNIQENKEGLELLKTAIEKAGYTGKVVIGMDVAASEFYSEDKTYDLNFKEENNNGSQKISGDALKDLYKSFVAEYPIVSIEDPFDQDDWEHYAKMTTECGTEVQIVGDDLLVTNPKRVAKAIAEKSCNALLLKVNQIGSVTESIEAVKMSKKAGWGVMTSHRSGETEDTFIADLAVGLSTGQIKTGAPCRSERLAKYNQLLRIEEELGSEAIYAGVNFRKPVEPY.

2 residues coordinate substrate: H163 and E172. The Proton donor role is filled by E215. D250, E300, and D327 together coordinate Mg(2+). Substrate contacts are provided by E300 and D327. The Proton acceptor role is filled by K352. Residues 379–382 (SHRS) and K403 contribute to the substrate site.

The protein belongs to the enolase family. As to quaternary structure, homodimer. Mg(2+) is required as a cofactor.

It localises to the cytoplasm. The protein localises to the cytosol. Its subcellular location is the nucleus. It is found in the mitochondrion outer membrane. It catalyses the reaction (2R)-2-phosphoglycerate = phosphoenolpyruvate + H2O. It functions in the pathway carbohydrate degradation; glycolysis; pyruvate from D-glyceraldehyde 3-phosphate: step 4/5. Functionally, multifunctional enzyme that acts as an enolase involved in the metabolism and as a positive regulator of cold-responsive gene transcription. Binds to the cis-element the gene promoter of STZ/ZAT10, a zinc finger transcriptional repressor. The protein is Bifunctional enolase 2/transcriptional activator (ENO2) of Arabidopsis thaliana (Mouse-ear cress).